The primary structure comprises 392 residues: Aryl-hydrocarbon-interacting protein-like 1 (392 aa).

One can recognise a PPIase FKBP-type domain in the interval 53–145; it reads RQVDQPMHII…DLDELQKEPQ (93 aa). TPR repeat units lie at residues 178–211, 230–263, and 264–297; these read VPVL…LRNL, NTLT…HPGI, and VKAY…EPSM. The tract at residues 329-392 is disordered; the sequence is QGATQPPAEP…PLSPGHSLQH (64 aa). 2 stretches are compositionally biased toward pro residues: residues 335 to 346 and 355 to 366; these read PAEPPAQPPTAP and PADPPAEPPTAP.

As to quaternary structure, interacts with NUB1.

Its subcellular location is the cytoplasm. The protein localises to the nucleus. Functionally, may be important in protein trafficking and/or protein folding and stabilization. The polypeptide is Aryl-hydrocarbon-interacting protein-like 1 (AIPL1) (Macaca mulatta (Rhesus macaque)).